The sequence spans 493 residues: MCVRLAGNLFKTSDFIQCQKLILAVSGGSDSLALLFLVKDHLKTLSVPPEIIVVTVDHQLRQESAREASIVAEICRAHHIQHRIVRWEGKKPKTHIASSARVARYDLLFQEAQKQGATLIMTGHTLNDQVETYQMRYQRLQKSADVLQQEAFAEMGGGVHADVLQQEAFAERCERMGVGGHGGDIAEKSDGLIYERGLSCIPREALLRGTVRLIRPLLGVKRETLRTYLRLKEKTWIEDPTNEDCNFERVRVRQSLQPKKFTCIARKVHEAALQRRQQAKNIADLILALDITVEYGRCFIAKPALFLQKHPGFPFVVGLFAVLMGGGFYLLPHKKLSTLVQKLSLHSSEKRRFTYAGSVIEYNRSGIAFWREARNIKEAIVEKGQTFLWDGRYQITNHSHEPIKVGAAGLQQLKSLFKNNNFNLENTHFPSLKSLLMISNDKGYDIPELAYHAAMQHTITIRRIMAPFDWLLSSQDAAFVNVVQPFFDIKVKG.

Residue 26–31 coordinates ATP; it reads SGGSDS.

This sequence belongs to the tRNA(Ile)-lysidine synthase family.

Its subcellular location is the cytoplasm. The enzyme catalyses cytidine(34) in tRNA(Ile2) + L-lysine + ATP = lysidine(34) in tRNA(Ile2) + AMP + diphosphate + H(+). Functionally, ligates lysine onto the cytidine present at position 34 of the AUA codon-specific tRNA(Ile) that contains the anticodon CAU, in an ATP-dependent manner. Cytidine is converted to lysidine, thus changing the amino acid specificity of the tRNA from methionine to isoleucine. This is tRNA(Ile)-lysidine synthase from Bartonella henselae (strain ATCC 49882 / DSM 28221 / CCUG 30454 / Houston 1) (Rochalimaea henselae).